The chain runs to 465 residues: GTPase Der (465 aa).

EngA-type G domains follow at residues 3–167 (PLVA…PEEG) and 179–352 (IRIA…ESAN). GTP contacts are provided by residues 9–16 (GRPNVGKS), 57–61 (DTGGI), 119–122 (NKID), 185–192 (GRPNVGKS), 232–236 (DTAGL), and 297–300 (NKWD). A KH-like domain is found at 353-437 (KTFTTSEVNK…PVSFIFREGT (85 aa)).

This sequence belongs to the TRAFAC class TrmE-Era-EngA-EngB-Septin-like GTPase superfamily. EngA (Der) GTPase family. Associates with the 50S ribosomal subunit.

Its function is as follows. GTPase that plays an essential role in the late steps of ribosome biogenesis. The sequence is that of GTPase Der from Stenotrophomonas maltophilia (strain R551-3).